Here is a 608-residue protein sequence, read N- to C-terminus: Preterminal protein (608 aa).

The Nuclear localization signal signature appears at 338–347; the sequence is RLPMRRRRRR. The interval 342–377 is disordered; that stretch reads RRRRRRAPPPPPMSEELSEPEVEAFPPASPPRRSFE. Ser536 carries the O-(5'-phospho-DNA)-serine modification.

This sequence belongs to the adenoviridae terminal protein family. Heterodimer with the polymerase; this heterodimer binds to bp 9 to 18 of the genome. Interacts with host POU2F1; POU2F1 binds to the auxiliary sequences in the inverted terminal repeats and tethers the pTP-POL heterodimer to the origin DNA thereby participating in the assembly of the pre-initiation complex (POL-TP-DBP-NFIA-POU2F1). Preterminal protein is used to replicate viral genome, upon genomic encapsidation it is processed first into iTP and finally into TP by adenovirus protease.

Its subcellular location is the host nucleus matrix. Functionally, protein covalently bound to the viral DNA that acts as a primer for viral genomic replication by DNA strand displacement. Assembles on the viral origin of replication in an initiation complex with viral polymerase, DBP, host NFIA and host POU2F1/OCT1. During initiation, the polymerase covalently couples the first dCTP with Ser-580 of pTP. The terminal protein stimulates the template activity over 20 fold compared to protein-free templates. Neo-synthesized viral genomes are linked to two preterminal proteins, one for each 5' end. These new genomes are encapsidated in the nucleus, and during capsid maturation by viral protease, preterminal protein is first cleaved into intermediary (iTP), then into mature TP. May play a role in host nuclear matrix localization of genomic DNA. This is Preterminal protein from Canine adenovirus serotype 1 (strain CLL) (CAdV-1).